The sequence spans 130 residues: Small ribosomal subunit protein uS8 (130 aa).

It belongs to the universal ribosomal protein uS8 family.

This Strongylocentrotus purpuratus (Purple sea urchin) protein is Small ribosomal subunit protein uS8 (RPS15A).